Consider the following 173-residue polypeptide: Adenine phosphoribosyltransferase (173 aa).

This sequence belongs to the purine/pyrimidine phosphoribosyltransferase family. In terms of assembly, homodimer.

It localises to the cytoplasm. It catalyses the reaction AMP + diphosphate = 5-phospho-alpha-D-ribose 1-diphosphate + adenine. It functions in the pathway purine metabolism; AMP biosynthesis via salvage pathway; AMP from adenine: step 1/1. Catalyzes a salvage reaction resulting in the formation of AMP, that is energically less costly than de novo synthesis. This is Adenine phosphoribosyltransferase from Ureaplasma parvum serovar 3 (strain ATCC 27815 / 27 / NCTC 11736).